We begin with the raw amino-acid sequence, 378 residues long: Erythronate-4-phosphate dehydrogenase (378 aa).

Substrate contacts are provided by Ser45 and Thr66. Residues Asp146 and Thr175 each coordinate NAD(+). The active site involves Arg208. Asp232 contributes to the NAD(+) binding site. The active site involves Glu237. His254 functions as the Proton donor in the catalytic mechanism. Gly257 contributes to the NAD(+) binding site. Tyr258 contributes to the substrate binding site.

Belongs to the D-isomer specific 2-hydroxyacid dehydrogenase family. PdxB subfamily. In terms of assembly, homodimer.

The protein resides in the cytoplasm. The catalysed reaction is 4-phospho-D-erythronate + NAD(+) = (R)-3-hydroxy-2-oxo-4-phosphooxybutanoate + NADH + H(+). It participates in cofactor biosynthesis; pyridoxine 5'-phosphate biosynthesis; pyridoxine 5'-phosphate from D-erythrose 4-phosphate: step 2/5. Catalyzes the oxidation of erythronate-4-phosphate to 3-hydroxy-2-oxo-4-phosphonooxybutanoate. This Citrobacter koseri (strain ATCC BAA-895 / CDC 4225-83 / SGSC4696) protein is Erythronate-4-phosphate dehydrogenase.